The sequence spans 311 residues: Formimidoylglutamase (311 aa).

Mn(2+) contacts are provided by His-127, Asp-152, His-154, Asp-156, Cys-236, and Asp-238.

Belongs to the arginase family. The cofactor is Mn(2+).

The catalysed reaction is N-formimidoyl-L-glutamate + H2O = formamide + L-glutamate. It participates in amino-acid degradation; L-histidine degradation into L-glutamate; L-glutamate from N-formimidoyl-L-glutamate (hydrolase route): step 1/1. Catalyzes the conversion of N-formimidoyl-L-glutamate to L-glutamate and formamide. This chain is Formimidoylglutamase, found in Macrococcus caseolyticus (strain JCSC5402) (Macrococcoides caseolyticum).